The following is a 100-amino-acid chain: Envelope glycoprotein N (100 aa).

A signal peptide spans 1–27 (MLSTRFVTLAILACLLVVLGLARGAGG). Residues 28–63 (DPGVKQRIDVAREEERRDFWHAACSGHGFPITTPST) lie on the Virion surface side of the membrane. Residues 64-84 (AAILFYVSLLAVGVAVACQAY) form a helical membrane-spanning segment. The Intravirion portion of the chain corresponds to 85 to 100 (RAVLRIVTLEMLQHLH).

It belongs to the herpesviridae glycoprotein N family. As to quaternary structure, interacts (via N-terminus) with gM (via N-terminus). The gM-gN heterodimer forms the gCII complex.

Its subcellular location is the virion membrane. It is found in the host membrane. The protein localises to the host Golgi apparatus. The protein resides in the host trans-Golgi network. In terms of biological role, envelope glycoprotein necessary for proper maturation of gM and modulation of its membrane fusion activity. Also plays a critical role in virion morphogenesis. The sequence is that of Envelope glycoprotein N from Equus caballus (Horse).